The following is a 271-amino-acid chain: Sec-independent protein translocase protein TatC (271 aa).

A run of 5 helical transmembrane segments spans residues 24–44 (ISVG…EQIF), 78–98 (FFAG…LFIA), 112–132 (FLFV…YFVF), 159–179 (LVIK…GLLL), and 215–235 (FTQV…IFFG). Residues 247-271 (AAEEAQWAADHNVDDDDVDHPEHKA) form a disordered region.

It belongs to the TatC family. As to quaternary structure, the Tat system comprises two distinct complexes: a TatABC complex, containing multiple copies of TatA, TatB and TatC subunits, and a separate TatA complex, containing only TatA subunits. Substrates initially bind to the TatABC complex, which probably triggers association of the separate TatA complex to form the active translocon.

It is found in the cell inner membrane. Part of the twin-arginine translocation (Tat) system that transports large folded proteins containing a characteristic twin-arginine motif in their signal peptide across membranes. Together with TatB, TatC is part of a receptor directly interacting with Tat signal peptides. In Magnetococcus marinus (strain ATCC BAA-1437 / JCM 17883 / MC-1), this protein is Sec-independent protein translocase protein TatC.